We begin with the raw amino-acid sequence, 1209 residues long: Pre-mRNA-splicing factor rse1 (1209 aa).

It belongs to the RSE1 family. In terms of assembly, associated with the spliceosome.

Its subcellular location is the nucleus. Its function is as follows. Involved in pre-mRNA splicing and cell cycle control. This Neurospora crassa (strain ATCC 24698 / 74-OR23-1A / CBS 708.71 / DSM 1257 / FGSC 987) protein is Pre-mRNA-splicing factor rse1 (msp-5).